The following is a 184-amino-acid chain: GTP cyclohydrolase 1 (184 aa).

Cys75, His78, and Cys146 together coordinate Zn(2+).

This sequence belongs to the GTP cyclohydrolase I family. As to quaternary structure, homomer.

The catalysed reaction is GTP + H2O = 7,8-dihydroneopterin 3'-triphosphate + formate + H(+). The protein operates within cofactor biosynthesis; 7,8-dihydroneopterin triphosphate biosynthesis; 7,8-dihydroneopterin triphosphate from GTP: step 1/1. The sequence is that of GTP cyclohydrolase 1 from Streptococcus pneumoniae (strain ATCC 700669 / Spain 23F-1).